The following is a 211-amino-acid chain: uncharacterized protein (211 aa).

Positions 155 to 211 (AAENASEEGDKKQIITDSGKLPETEELTETTNEDLDIKQFSPYSSESSANVSSYNKS) are disordered. Acidic residues predominate over residues 178-188 (TEELTETTNED). Low complexity predominate over residues 195–211 (SPYSSESSANVSSYNKS).

This is an uncharacterized protein from Schizosaccharomyces pombe (strain 972 / ATCC 24843) (Fission yeast).